Consider the following 272-residue polypeptide: Dermonecrotic toxin LvSicTox-alphaIC1bii (272 aa).

Histidine 5 is a catalytic residue. Mg(2+)-binding residues include glutamate 25 and aspartate 27. Histidine 41 functions as the Nucleophile in the catalytic mechanism. Intrachain disulfides connect cysteine 45/cysteine 51 and cysteine 47/cysteine 189. Residue aspartate 84 participates in Mg(2+) binding.

This sequence belongs to the arthropod phospholipase D family. Class II subfamily. Mg(2+) is required as a cofactor. Expressed by the venom gland.

It localises to the secreted. It catalyses the reaction an N-(acyl)-sphingosylphosphocholine = an N-(acyl)-sphingosyl-1,3-cyclic phosphate + choline. The enzyme catalyses an N-(acyl)-sphingosylphosphoethanolamine = an N-(acyl)-sphingosyl-1,3-cyclic phosphate + ethanolamine. It carries out the reaction a 1-acyl-sn-glycero-3-phosphocholine = a 1-acyl-sn-glycero-2,3-cyclic phosphate + choline. The catalysed reaction is a 1-acyl-sn-glycero-3-phosphoethanolamine = a 1-acyl-sn-glycero-2,3-cyclic phosphate + ethanolamine. Its function is as follows. Dermonecrotic toxins cleave the phosphodiester linkage between the phosphate and headgroup of certain phospholipids (sphingolipid and lysolipid substrates), forming an alcohol (often choline) and a cyclic phosphate. This toxin acts on sphingomyelin (SM). It may also act on ceramide phosphoethanolamine (CPE), lysophosphatidylcholine (LPC) and lysophosphatidylethanolamine (LPE), but not on lysophosphatidylserine (LPS), and lysophosphatidylglycerol (LPG). It acts by transphosphatidylation, releasing exclusively cyclic phosphate products as second products. Induces dermonecrosis, hemolysis, increased vascular permeability, edema, inflammatory response, and platelet aggregation. The polypeptide is Dermonecrotic toxin LvSicTox-alphaIC1bii (Loxosceles variegata (Recluse spider)).